We begin with the raw amino-acid sequence, 519 residues long: MSGLEQPAELSRVWRWLLLVSVAICAASGLVYELALVSLSASLNGGGIVETSLIVAGYVAALGVGAILVKPFLRWPAQTFLAVETLLGLIGGLSALVLYMTFAVVGQNLWMLVLATALIGILVGAELPLLMTMIQRGRLADARTTGSLVATLNAADYLGALLGGLAWPFILLPWLGMMRGAAAAGMINLLAALFVGCVLLRHLLPRAQFIRAVVALLVAIAVLGTVLVRSDGIVATARQQLYRDPVIYAHQSDYQDIVVTQRGADRRLYLNGGLQYSTRDEHRYTESLVYPGLSDSARTALIIGGGDGLAARELLRFPDMRITQVELDPEVIEVANTILLPDNGGAMQDPRVTVITDDAFTWLRAGGDGGQRYDAIFVDLPDPNNDTMARLYSQEFYTLALARLNDGGRMVVQSSSAYTTPDVFWRIASTMSAAGCGAVIPYHVHVPTFGDWGFQLCGPEGTELGLRGDTPSLRFLTDEVLAAAGVFGADNQPRELEPSTLDHPRVVEDLRRGYRQAGE.

The next 7 helical transmembrane spans lie at 17–37 (LLLV…LALV), 53–73 (LIVA…KPFL), 86–106 (LLGL…AVVG), 109–129 (LWML…ELPL), 158–178 (LGAL…LGMM), 180–200 (GAAA…CVLL), and 208–228 (QFIR…TVLV). Residues 200–463 (LRHLLPRAQF…FQLCGPEGTE (264 aa)) are spermidine synthase. Positions 225 to 459 (TVLVRSDGIV…GDWGFQLCGP (235 aa)) constitute a PABS domain. Glutamine 255 lines the S-methyl-5'-thioadenosine pocket. Position 307 (aspartate 307) interacts with spermidine. Residues glutamate 326 and 358–359 (DA) contribute to the S-methyl-5'-thioadenosine site. Residue aspartate 379 is the Proton acceptor of the active site.

Belongs to the spermidine/spermine synthase family. Homodimer or homotetramer.

Its subcellular location is the cell membrane. It catalyses the reaction S-adenosyl 3-(methylsulfanyl)propylamine + putrescine = S-methyl-5'-thioadenosine + spermidine + H(+). Its pathway is amine and polyamine biosynthesis; spermidine biosynthesis; spermidine from putrescine: step 1/1. Catalyzes the irreversible transfer of a propylamine group from the amino donor S-adenosylmethioninamine (decarboxy-AdoMet) to putrescine (1,4-diaminobutane) to yield spermidine. The polypeptide is Polyamine aminopropyltransferase (Corynebacterium efficiens (strain DSM 44549 / YS-314 / AJ 12310 / JCM 11189 / NBRC 100395)).